An 818-amino-acid polypeptide reads, in one-letter code: RNA-directed RNA polymerase (818 aa).

The region spanning 524–641 (PVAIGLDASR…IIERRNLKRV (118 aa)) is the RdRp catalytic domain.

This sequence belongs to the tombusviridae RNA polymerase family.

The enzyme catalyses RNA(n) + a ribonucleoside 5'-triphosphate = RNA(n+1) + diphosphate. In terms of biological role, RNA-dependent RNA polymerase that plays an essential role in the virus replication. This is RNA-directed RNA polymerase from Cymbidium (Creeping white clover).